The primary structure comprises 161 residues: Putative pre-16S rRNA nuclease (161 aa).

The protein belongs to the YqgF nuclease family.

Its subcellular location is the cytoplasm. Its function is as follows. Could be a nuclease involved in processing of the 5'-end of pre-16S rRNA. In Methylocella silvestris (strain DSM 15510 / CIP 108128 / LMG 27833 / NCIMB 13906 / BL2), this protein is Putative pre-16S rRNA nuclease.